Here is a 358-residue protein sequence, read N- to C-terminus: Polyadenylate-binding protein-interacting protein 11 (358 aa).

Low complexity predominate over residues 1-19 (MAVVETGAAATAADAGGVV). A disordered region spans residues 1–45 (MAVVETGAAATAADAGGVVIQPPPSSPPSSMTSQDSGVSSDDQNH). Positions 31–41 (MTSQDSGVSSD) are enriched in polar residues. A PAM2-like motif is present at residues 92-102 (KLNPMAEEFVP). The disordered stretch occupies residues 136 to 164 (GGYGNENGGFRRKKSFGQGKRRMNARTSM). A compositionally biased stretch (basic residues) spans 145 to 159 (FRRKKSFGQGKRRMN). The short motif at 146 to 157 (RRKKSFGQGKRR) is the Bipartite nuclear localization signal element. 2 RRM domains span residues 173–248 (RTVY…PSKT) and 270–346 (RTIY…PSKT).

Expressed in cauline leaves, stems, immature siliques and primary inflorescences.

The protein localises to the nucleus. The polypeptide is Polyadenylate-binding protein-interacting protein 11 (CID11) (Arabidopsis thaliana (Mouse-ear cress)).